Consider the following 655-residue polypeptide: Serine/threonine-protein kinase SKM1 (655 aa).

In terms of domain architecture, PH spans 3–118; sequence GVKKEGWISY…WLDAIFAKCP (116 aa). A CRIB domain is found at 123–136; the sequence is VSSPTNFTHKVHVG. 2 stretches are compositionally biased toward basic and acidic residues: residues 265 to 276 and 318 to 327; these read EEGRVHVSKEST and KNHDSKTKWH. The segment at 265 to 327 is disordered; sequence EEGRVHVSKE…KNHDSKTKWH (63 aa). Positions 360-639 constitute a Protein kinase domain; sequence FQLVEKAGQG…VRKLLTFEFL (280 aa). Residues 366–374 and lysine 406 contribute to the ATP site; that span reads AGQGASGAV. The active-site Proton acceptor is the aspartate 507.

The protein belongs to the protein kinase superfamily. STE Ser/Thr protein kinase family. STE20 subfamily.

It catalyses the reaction L-seryl-[protein] + ATP = O-phospho-L-seryl-[protein] + ADP + H(+). It carries out the reaction L-threonyl-[protein] + ATP = O-phospho-L-threonyl-[protein] + ADP + H(+). In terms of biological role, may be involved in cellular signaling or cytoskeletal functions. May play a role in morphogenetic control. The polypeptide is Serine/threonine-protein kinase SKM1 (SKM1) (Saccharomyces cerevisiae (strain ATCC 204508 / S288c) (Baker's yeast)).